The chain runs to 308 residues: MQRITYLGPEGTFSEAAMITLRTTGRIPGSSEVEPVSVASAREALVQVQAGDADYACVPIESSLEGPVVPTLDTLAVGAPLQIFAETVLPVSFTIAVRPGTAAGDVKTVAGFPIAAAQVREWLATNLPDAELVAANSNAAAAEDVKAERADAGVCTEWAAQRLGLHALASGVVDEAHAHTRFVLVGRPGPPPAATGADRTSVVLGLGNVPGALAAAMNEFAIRDIDLTRIESRPTRTGLGTYRFFLDCVGHIDDIAVGEALKGLHRRCEDVRYLGSWPRGTTAPTGANPPVLDEASGWLAETREGRLR.

A Prephenate dehydratase domain is found at 3–187 (RITYLGPEGT…AHTRFVLVGR (185 aa)). The 78-residue stretch at 201–278 (SVVLGLGNVP…EDVRYLGSWP (78 aa)) folds into the ACT domain.

In terms of assembly, homodimer.

It catalyses the reaction prephenate + H(+) = 3-phenylpyruvate + CO2 + H2O. The protein operates within amino-acid biosynthesis; L-phenylalanine biosynthesis; phenylpyruvate from prephenate: step 1/1. This Mycobacteroides abscessus (strain ATCC 19977 / DSM 44196 / CCUG 20993 / CIP 104536 / JCM 13569 / NCTC 13031 / TMC 1543 / L948) (Mycobacterium abscessus) protein is Prephenate dehydratase (pheA).